The sequence spans 343 residues: UDP-3-O-acylglucosamine N-acyltransferase (343 aa).

The active-site Proton acceptor is histidine 237.

This sequence belongs to the transferase hexapeptide repeat family. LpxD subfamily. As to quaternary structure, homotrimer.

The enzyme catalyses a UDP-3-O-[(3R)-3-hydroxyacyl]-alpha-D-glucosamine + a (3R)-hydroxyacyl-[ACP] = a UDP-2-N,3-O-bis[(3R)-3-hydroxyacyl]-alpha-D-glucosamine + holo-[ACP] + H(+). Its pathway is bacterial outer membrane biogenesis; LPS lipid A biosynthesis. Its function is as follows. Catalyzes the N-acylation of UDP-3-O-acylglucosamine using 3-hydroxyacyl-ACP as the acyl donor. Is involved in the biosynthesis of lipid A, a phosphorylated glycolipid that anchors the lipopolysaccharide to the outer membrane of the cell. The sequence is that of UDP-3-O-acylglucosamine N-acyltransferase from Synechococcus sp. (strain JA-3-3Ab) (Cyanobacteria bacterium Yellowstone A-Prime).